The chain runs to 67 residues: Photosystem II reaction center protein H (67 aa).

A helical transmembrane segment spans residues 27-47 (GAVPVMAFIGVLLLVFLVILL).

This sequence belongs to the PsbH family. In terms of assembly, PSII is composed of 1 copy each of membrane proteins PsbA, PsbB, PsbC, PsbD, PsbE, PsbF, PsbH, PsbI, PsbJ, PsbK, PsbL, PsbM, PsbT, PsbX, PsbY, Psb30/Ycf12, peripheral proteins PsbO, CyanoQ (PsbQ), PsbU, PsbV and a large number of cofactors. It forms dimeric complexes.

The protein localises to the cellular thylakoid membrane. One of the components of the core complex of photosystem II (PSII), required for its stability and/or assembly. PSII is a light-driven water:plastoquinone oxidoreductase that uses light energy to abstract electrons from H(2)O, generating O(2) and a proton gradient subsequently used for ATP formation. It consists of a core antenna complex that captures photons, and an electron transfer chain that converts photonic excitation into a charge separation. The sequence is that of Photosystem II reaction center protein H from Prochlorococcus marinus (strain MIT 9211).